The sequence spans 277 residues: Undecaprenyl-diphosphatase (277 aa).

Transmembrane regions (helical) follow at residues 83 to 103, 109 to 129, 188 to 208, 218 to 238, and 256 to 276; these read FALN…VFAS, LFAP…ILWI, ATEF…VYSV, ADIP…FLCV, and YRIV…VVWA.

Belongs to the UppP family.

It localises to the cell inner membrane. The enzyme catalyses di-trans,octa-cis-undecaprenyl diphosphate + H2O = di-trans,octa-cis-undecaprenyl phosphate + phosphate + H(+). Functionally, catalyzes the dephosphorylation of undecaprenyl diphosphate (UPP). Confers resistance to bacitracin. This Janthinobacterium sp. (strain Marseille) (Minibacterium massiliensis) protein is Undecaprenyl-diphosphatase.